Consider the following 429-residue polypeptide: Glutamate-1-semialdehyde 2,1-aminomutase 2 (429 aa).

Position 268 is an N6-(pyridoxal phosphate)lysine (Lys268).

This sequence belongs to the class-III pyridoxal-phosphate-dependent aminotransferase family. HemL subfamily. As to quaternary structure, homodimer. The cofactor is pyridoxal 5'-phosphate.

Its subcellular location is the cytoplasm. It carries out the reaction (S)-4-amino-5-oxopentanoate = 5-aminolevulinate. It functions in the pathway porphyrin-containing compound metabolism; protoporphyrin-IX biosynthesis; 5-aminolevulinate from L-glutamyl-tRNA(Glu): step 2/2. The protein is Glutamate-1-semialdehyde 2,1-aminomutase 2 of Staphylococcus aureus (strain bovine RF122 / ET3-1).